Reading from the N-terminus, the 362-residue chain is Ferrochelatase (362 aa).

Residues histidine 228 and glutamate 309 each contribute to the Fe cation site.

It belongs to the ferrochelatase family.

The protein resides in the cytoplasm. The catalysed reaction is heme b + 2 H(+) = protoporphyrin IX + Fe(2+). It participates in porphyrin-containing compound metabolism; protoheme biosynthesis; protoheme from protoporphyrin-IX: step 1/1. Functionally, catalyzes the ferrous insertion into protoporphyrin IX. This chain is Ferrochelatase, found in Bordetella bronchiseptica (strain ATCC BAA-588 / NCTC 13252 / RB50) (Alcaligenes bronchisepticus).